We begin with the raw amino-acid sequence, 125 residues long: Putative glutaredoxin-C2 (125 aa).

Residues 2–103 form the Glutaredoxin domain; sequence AERVARLSSQ…PLLREAGALW (102 aa). C22 and C25 form a disulfide bridge.

It belongs to the glutaredoxin family. CC-type subfamily.

The protein localises to the cytoplasm. Functionally, has a glutathione-disulfide oxidoreductase activity in the presence of NADPH and glutathione reductase. Reduces low molecular weight disulfides and proteins. This chain is Putative glutaredoxin-C2 (GRXC2), found in Oryza sativa subsp. japonica (Rice).